The sequence spans 183 residues: Small ribosomal subunit protein uS4c (183 aa).

Residues 82–143 form the S4 RNA-binding domain; sequence MRLDNILFRL…KQRSKALIQN (62 aa).

The protein belongs to the universal ribosomal protein uS4 family. Part of the 30S ribosomal subunit. Contacts protein S5. The interaction surface between S4 and S5 is involved in control of translational fidelity.

It is found in the plastid. The protein resides in the chloroplast. Functionally, one of the primary rRNA binding proteins, it binds directly to 16S rRNA where it nucleates assembly of the body of the 30S subunit. Its function is as follows. With S5 and S12 plays an important role in translational accuracy. The polypeptide is Small ribosomal subunit protein uS4c (rps4) (Aristea capitata).